Reading from the N-terminus, the 170-residue chain is Calcineurin subunit B type 2 (170 aa).

The N-myristoyl glycine moiety is linked to residue G2. 4 consecutive EF-hand domains span residues 18–46 (DEIK…FMSL), 50–85 (RHNP…FSVK), 87–122 (DEEQ…MVGN), and 128–163 (QLQQ…LEIH). Ca(2+) is bound by residues D31, D33, S35, S37, E42, D63, D65, D67, E69, E74, D100, D102, D104, Y106, and E111. The interval 131–136 (QLVDKT) is calcineurin A binding. Positions 141, 143, 145, 147, and 152 each coordinate Ca(2+).

It belongs to the calcineurin regulatory subunit family. As to quaternary structure, forms a complex composed of a calmodulin-dependent catalytic subunit (also known as calcineurin A) and a regulatory Ca(2+)-binding subunit (also known as calcineurin B). There are three catalytic subunits, each encoded by a separate gene (PPP3CA, PPP3CB, and PPP3CC) and two regulatory subunits which are also encoded by separate genes (PPP3R1 and PPP3R2). Interacts with SPATA33 (via PQIIIT motif). As to expression, testis-specific.

The protein localises to the mitochondrion. Functionally, regulatory subunit of calcineurin, a calcium-dependent, calmodulin stimulated protein phosphatase. Confers calcium sensitivity. This is Calcineurin subunit B type 2 (PPP3R2) from Homo sapiens (Human).